A 101-amino-acid polypeptide reads, in one-letter code: Putative metal transport protein HQ_3622A (101 aa).

Positions 1–32 (MKIISMSMDSWIQRAALMLLGLVIVAPFFGWT) are cleaved as a signal peptide. The helical transmembrane segment at 75 to 95 (IGTLISAGVGTVLTLIVAFGA) threads the bilayer.

Its subcellular location is the cell membrane. In terms of biological role, may be involved in metal transport. This chain is Putative metal transport protein HQ_3622A, found in Haloquadratum walsbyi (strain DSM 16790 / HBSQ001).